Here is a 447-residue protein sequence, read N- to C-terminus: Na(+)-translocating NADH-quinone reductase subunit A (447 aa).

Belongs to the NqrA family. As to quaternary structure, composed of six subunits; NqrA, NqrB, NqrC, NqrD, NqrE and NqrF.

It carries out the reaction a ubiquinone + n Na(+)(in) + NADH + H(+) = a ubiquinol + n Na(+)(out) + NAD(+). Its function is as follows. NQR complex catalyzes the reduction of ubiquinone-1 to ubiquinol by two successive reactions, coupled with the transport of Na(+) ions from the cytoplasm to the periplasm. NqrA to NqrE are probably involved in the second step, the conversion of ubisemiquinone to ubiquinol. The protein is Na(+)-translocating NADH-quinone reductase subunit A of Yersinia pseudotuberculosis serotype O:1b (strain IP 31758).